A 271-amino-acid chain; its full sequence is Extent of cell elongation protein 1 (271 aa).

Residues 1–18 (MKFSKIACATVFALSSQA) form the signal peptide. A helical membrane pass occupies residues 62-82 (SIIGIIMGILGNIPQVIQIIM).

As to quaternary structure, polymerizes in solution to form membrane pores. Cleavage by KEX2 generates 8 peptides ECE1-I to ECE1-VIII, all terminating in Lys-Arg. Only peptide ECE1-III, called candidalysin, shows toxin activity.

It localises to the secreted. It is found in the host cell membrane. Its function is as follows. Secreted protein cleaved by KEX2 in 8 similar peptides (ECE1-I to ECE1-VIII). Stimulates biofilm formation. Functionally, acts as a cytolytic peptide toxin that directly damages host epithelial membranes, triggers a danger response signaling pathway and activates epithelial immunity. Polymerizes in solution to form membrane pores to damage epithelial cells. Induces calcium influx, oxidative stress, mitochondrial dysfunction and ATP depletion in host cells, leading to epithelial necrosis. Serves as a danger signal that potentiates the immune response, and more specifically IL-17 response. Induces cytokine/chemokine secretion by host (especially CCL2/3/4, CXCL1 and S100A8), neutrophil recruitment, and promotes mortality in zebrafish and murine models of systemic fungal infection. Mediates distinct epithelial inflammatory responses through p38, EGFR-ERK and TREM-1/DAP12 pathways. Acts as one of the hypha-derived drivers of NLRP3 inflammasome responses in primary macrophages and thus contributes to the capacity to induce maturation and secretion of IL-1beta from primary macrophages. Stimulates mast cells by mediating cross-talk between signaling pathways activated by the dectin-1 receptor and MAPKs. Enables escape via the gasdermin-mediated pyroptosis, as well as a cell lysis pathway associated with macrophage extracellular trap formation termed ETosis. Acts as the main hemolytic factor of C.albicans. As an exotoxine, also promotes alcohol-associated liver disease or oral carcinogenesis. The protein is Extent of cell elongation protein 1 of Candida albicans (strain SC5314 / ATCC MYA-2876) (Yeast).